A 242-amino-acid polypeptide reads, in one-letter code: Small ribosomal subunit protein uS5 (242 aa).

Over residues 1–14 (MADENSTGPGNQPE) the composition is skewed to polar residues. Residues 1-65 (MADENSTGPG…DRRPRDEDGG (65 aa)) are disordered. Residues 41 to 65 (DGGRGGRDGGRGRRDDRRPRDEDGG) show a composition bias toward basic and acidic residues. The S5 DRBM domain occupies 68–131 (LIEKLVHINR…AAAKKAMIRV (64 aa)). The interval 204–242 (EQTSPKSVAQRRGKKVSDLIKRGGASDRAAEAEAAAVTE) is disordered. A compositionally biased stretch (basic and acidic residues) spans 218 to 234 (KVSDLIKRGGASDRAAE).

This sequence belongs to the universal ribosomal protein uS5 family. As to quaternary structure, part of the 30S ribosomal subunit. Contacts proteins S4 and S8.

In terms of biological role, with S4 and S12 plays an important role in translational accuracy. Its function is as follows. Located at the back of the 30S subunit body where it stabilizes the conformation of the head with respect to the body. This chain is Small ribosomal subunit protein uS5, found in Sphingopyxis alaskensis (strain DSM 13593 / LMG 18877 / RB2256) (Sphingomonas alaskensis).